Consider the following 257-residue polypeptide: Capsid protein (257 aa).

The Bipartite nuclear localization signal motif lies at Lys-3–Lys-20. A Nuclear localization signal motif is present at residues Lys-40 to Arg-54. A zinc finger spans residues Cys-68–His-85. Residues Ile-101 to Met-122 carry the Nuclear export signal motif. Residues Lys-201–Arg-248 carry the Bipartite nuclear localization signal motif.

Belongs to the geminiviridae capsid protein family. Homomultimer. Binds to single-stranded and double-stranded viral DNA. Interacts (via nuclear localization signals) with host importin alpha-1a.

Its subcellular location is the virion. The protein resides in the host nucleus. Functionally, encapsidates the viral genome into characteristic twinned ('geminate') particles. Binds the genomic viral ssDNA and shuttles it into and out of the cell nucleus. Plays a role in protection of the genome from degradation, virus acquisition and transmission by insect vectors, infectivity, and systemic movement. The CP of monopartite geminiviruses is absolutely essential for virus movement. The protein is Capsid protein of Solanum lycopersicum (Tomato).